Reading from the N-terminus, the 148-residue chain is Snaclec stejaggregin-A subunit beta-3 (148 aa).

Positions 1 to 23 (MGRFISVSFGLLVVFLSLSGAGA) are cleaved as a signal peptide. Cys27 and Cys38 are joined by a disulfide. Residues 34–145 (YDLYCYKVFK…CSRTHYVVCK (112 aa)) enclose the C-type lectin domain. 2 N-linked (GlcNAc...) asparagine glycosylation sites follow: Asn47 and Asn78. 2 cysteine pairs are disulfide-bonded: Cys55–Cys144 and Cys121–Cys136.

Belongs to the snaclec family. As to quaternary structure, heteromultimer; disulfide-linked. As to expression, expressed by the venom gland.

The protein resides in the secreted. In terms of biological role, interferes with one step of hemostasis (modulation of platelet aggregation, or coagulation cascade, for example). The protein is Snaclec stejaggregin-A subunit beta-3 of Trimeresurus stejnegeri (Chinese green tree viper).